The following is a 205-amino-acid chain: Methylthioribulose-1-phosphate dehydratase (205 aa).

Residues His94 and His96 each contribute to the Zn(2+) site.

It belongs to the aldolase class II family. MtnB subfamily. Zn(2+) is required as a cofactor.

It carries out the reaction 5-(methylsulfanyl)-D-ribulose 1-phosphate = 5-methylsulfanyl-2,3-dioxopentyl phosphate + H2O. It functions in the pathway amino-acid biosynthesis; L-methionine biosynthesis via salvage pathway; L-methionine from S-methyl-5-thio-alpha-D-ribose 1-phosphate: step 2/6. In terms of biological role, catalyzes the dehydration of methylthioribulose-1-phosphate (MTRu-1-P) into 2,3-diketo-5-methylthiopentyl-1-phosphate (DK-MTP-1-P). This chain is Methylthioribulose-1-phosphate dehydratase, found in Pectobacterium carotovorum subsp. carotovorum (strain PC1).